The following is a 343-amino-acid chain: Phosphoribosylformylglycinamidine cyclo-ligase (343 aa).

The protein belongs to the AIR synthase family.

The protein resides in the cytoplasm. It catalyses the reaction 2-formamido-N(1)-(5-O-phospho-beta-D-ribosyl)acetamidine + ATP = 5-amino-1-(5-phospho-beta-D-ribosyl)imidazole + ADP + phosphate + H(+). Its pathway is purine metabolism; IMP biosynthesis via de novo pathway; 5-amino-1-(5-phospho-D-ribosyl)imidazole from N(2)-formyl-N(1)-(5-phospho-D-ribosyl)glycinamide: step 2/2. This is Phosphoribosylformylglycinamidine cyclo-ligase from Staphylococcus epidermidis (strain ATCC 35984 / DSM 28319 / BCRC 17069 / CCUG 31568 / BM 3577 / RP62A).